A 356-amino-acid polypeptide reads, in one-letter code: Protein translocase subunit SecY (356 aa).

8 consecutive transmembrane segments (helical) span residues 24–44, 77–97, 125–145, 154–174, 183–203, 217–237, 274–294, and 317–337; these read LFVI…IPGI, IFAL…LLTV, LVLA…MPGM, FAFY…LMWL, IGNG…PPAV, FLLL…VVFI, VIPA…ASWF, and YVLL…ALVF.

The protein belongs to the SecY/SEC61-alpha family. In terms of assembly, component of the Sec protein translocase complex. Heterotrimer consisting of SecY, SecE and SecG subunits. The heterotrimers can form oligomers, although 1 heterotrimer is thought to be able to translocate proteins. Interacts with the ribosome. Interacts with SecDF, and other proteins may be involved. Interacts with SecA.

It is found in the cell membrane. Functionally, the central subunit of the protein translocation channel SecYEG. Consists of two halves formed by TMs 1-5 and 6-10. These two domains form a lateral gate at the front which open onto the bilayer between TMs 2 and 7, and are clamped together by SecE at the back. The channel is closed by both a pore ring composed of hydrophobic SecY resides and a short helix (helix 2A) on the extracellular side of the membrane which forms a plug. The plug probably moves laterally to allow the channel to open. The ring and the pore may move independently. This is Protein translocase subunit SecY from Buchnera aphidicola subsp. Acyrthosiphon kondoi (Acyrthosiphon kondoi symbiotic bacterium).